A 208-amino-acid chain; its full sequence is MELKVLNTSGTETGEVVTLNEEIFGVEVSEHAMYLDVKSILANKRQGTHKAKTRAQVRGGGRKPYRQKGTGNARQGSTRSPLMIGGGTIFGPQPRSYDQKVNKKVKLLARRSALSAKAKAGKILVIEDFRLDAIKTKPVAEILKNLGLEQKKILMLTPEYDMIIARSGRNIPVLNIMTADKVSTYDILNSSAILFQKTALTKIEDTLG.

Positions 45-85 (RQGTHKAKTRAQVRGGGRKPYRQKGTGNARQGSTRSPLMIG) are disordered. A compositionally biased stretch (basic residues) spans 46–66 (QGTHKAKTRAQVRGGGRKPYR). Polar residues predominate over residues 69–80 (GTGNARQGSTRS).

The protein belongs to the universal ribosomal protein uL4 family. As to quaternary structure, part of the 50S ribosomal subunit.

Functionally, one of the primary rRNA binding proteins, this protein initially binds near the 5'-end of the 23S rRNA. It is important during the early stages of 50S assembly. It makes multiple contacts with different domains of the 23S rRNA in the assembled 50S subunit and ribosome. In terms of biological role, forms part of the polypeptide exit tunnel. This Chlorobium phaeobacteroides (strain DSM 266 / SMG 266 / 2430) protein is Large ribosomal subunit protein uL4.